Reading from the N-terminus, the 349-residue chain is Alanine racemase (349 aa).

Lysine 35 functions as the Proton acceptor; specific for D-alanine in the catalytic mechanism. N6-(pyridoxal phosphate)lysine is present on lysine 35. Arginine 130 is a substrate binding site. The active-site Proton acceptor; specific for L-alanine is tyrosine 244. Position 292 (methionine 292) interacts with substrate.

This sequence belongs to the alanine racemase family. It depends on pyridoxal 5'-phosphate as a cofactor.

The catalysed reaction is L-alanine = D-alanine. It participates in amino-acid biosynthesis; D-alanine biosynthesis; D-alanine from L-alanine: step 1/1. Functionally, catalyzes the interconversion of L-alanine and D-alanine. May also act on other amino acids. This Cereibacter sphaeroides (strain KD131 / KCTC 12085) (Rhodobacter sphaeroides) protein is Alanine racemase (alr).